A 139-amino-acid chain; its full sequence is D-ribose pyranase (139 aa).

Histidine 20 serves as the catalytic Proton donor. Substrate-binding positions include aspartate 28, histidine 106, and 128 to 130; that span reads YAN.

It belongs to the RbsD / FucU family. RbsD subfamily. Homodecamer.

Its subcellular location is the cytoplasm. The enzyme catalyses beta-D-ribopyranose = beta-D-ribofuranose. It functions in the pathway carbohydrate metabolism; D-ribose degradation; D-ribose 5-phosphate from beta-D-ribopyranose: step 1/2. In terms of biological role, catalyzes the interconversion of beta-pyran and beta-furan forms of D-ribose. This chain is D-ribose pyranase, found in Actinobacillus succinogenes (strain ATCC 55618 / DSM 22257 / CCUG 43843 / 130Z).